We begin with the raw amino-acid sequence, 118 residues long: MATRRIISQEKTLLEKDDRIGSSPAASEKSNITPAVPASVIIKLLAFTFAMIVIPISSYFLTVDRLFKGNSTYAGATAAIMANVVLIGYIIVAMAEDQSDQENEKKGGGGKGEGKKDL.

At 1–35 (MATRRIISQEKTLLEKDDRIGSSPAASEKSNITPA) the chain is on the cytoplasmic side. The chain crosses the membrane as a helical span at residues 36-56 (VPASVIIKLLAFTFAMIVIPI). Over 57-73 (SSYFLTVDRLFKGNSTY) the chain is Lumenal. The chain crosses the membrane as a helical span at residues 74–94 (AGATAAIMANVVLIGYIIVAM). Topologically, residues 95 to 118 (AEDQSDQENEKKGGGGKGEGKKDL) are cytoplasmic. The tract at residues 98-118 (QSDQENEKKGGGGKGEGKKDL) is disordered. Positions 102–118 (ENEKKGGGGKGEGKKDL) are enriched in basic and acidic residues. The Prevents secretion from ER signature appears at 115–118 (KKDL).

It belongs to the VMA21 family.

It localises to the endoplasmic reticulum membrane. The protein resides in the endoplasmic reticulum-Golgi intermediate compartment membrane. Its subcellular location is the cytoplasmic vesicle. The protein localises to the COPII-coated vesicle membrane. Required for the assembly of the V0 complex of the vacuolar ATPase (V-ATPase) in the endoplasmic reticulum. This is Vacuolar ATPase assembly integral membrane protein vma-21 (vma-21) from Neurospora crassa (strain ATCC 24698 / 74-OR23-1A / CBS 708.71 / DSM 1257 / FGSC 987).